Here is a 589-residue protein sequence, read N- to C-terminus: 5'-AMP-activated protein kinase catalytic subunit alpha-1 (589 aa).

The Protein kinase domain maps to 24-276 (FVIKETIGKG…VKRIVNHSWF (253 aa)). ATP is bound by residues 30–38 (IGKGAFGAV) and Lys53. Asp147 serves as the catalytic Proton acceptor.

It belongs to the protein kinase superfamily. CAMK Ser/Thr protein kinase family. SNF1 subfamily.

It catalyses the reaction L-seryl-[protein] + ATP = O-phospho-L-seryl-[protein] + ADP + H(+). It carries out the reaction L-threonyl-[protein] + ATP = O-phospho-L-threonyl-[protein] + ADP + H(+). Functionally, probably does not act as a sensor that couples lifespan to information about energy levels and insulin-like signals. Together with aak-2, involved in the establishment of germline stem cell (GSC) quiescence during dauer development. Plays a role in the maintenance of glycogen stores which are necessary for resistance to hyperosmotic stress. In Caenorhabditis elegans, this protein is 5'-AMP-activated protein kinase catalytic subunit alpha-1 (aak-1).